We begin with the raw amino-acid sequence, 390 residues long: GDSL esterase/lipase At1g28580 (390 aa).

A signal peptide spans 1-28 (MAYPGSPILMKLLVFIFLSTFVVTNVSS). Ser-44 functions as the Nucleophile in the catalytic mechanism. N-linked (GlcNAc...) asparagine glycans are attached at residues Asn-140 and Asn-322. Active-site residues include Asp-347 and His-350.

This sequence belongs to the 'GDSL' lipolytic enzyme family.

It is found in the secreted. The protein is GDSL esterase/lipase At1g28580 of Arabidopsis thaliana (Mouse-ear cress).